We begin with the raw amino-acid sequence, 460 residues long: Elongation factor 1-alpha 3 (460 aa).

Residues 6-243 (KTHINIVVIG…DCIIPPQRPT (238 aa)) enclose the tr-type G domain. Residues 15–22 (GHVDSGKS) form a G1 region. The tract at residues 71–75 (GITID) is G2. Residues 92–95 (DAPG) are G3. The segment at 154–157 (NKMD) is G4. Residues 195-197 (SGF) are G5. A 5-glutamyl glycerylphosphorylethanolamine mark is found at Glu-302 and Glu-375.

Belongs to the TRAFAC class translation factor GTPase superfamily. Classic translation factor GTPase family. EF-Tu/EF-1A subfamily.

The protein resides in the cytoplasm. This protein promotes the GTP-dependent binding of aminoacyl-tRNA to the A-site of ribosomes during protein biosynthesis. This is Elongation factor 1-alpha 3 (eft-3) from Oscheius tipulae.